The following is a 393-amino-acid chain: Probable acetyl-CoA acyltransferase (393 aa).

Cysteine 88 acts as the Acyl-thioester intermediate in catalysis. Catalysis depends on proton acceptor residues histidine 349 and cysteine 378.

The protein belongs to the thiolase-like superfamily. Thiolase family.

It is found in the cytoplasm. The enzyme catalyses 2 acetyl-CoA = acetoacetyl-CoA + CoA. In Staphylococcus aureus (strain MSSA476), this protein is Probable acetyl-CoA acyltransferase.